The following is a 354-amino-acid chain: Glutamine synthetase (354 aa).

In terms of domain architecture, GS beta-grasp spans 22-101; it reads VQAEYVWIDG…VLAETFNNDG (80 aa). Positions 108–354 constitute a GS catalytic domain; the sequence is HRHHTKKVMD…IIVETTVLDK (247 aa).

Belongs to the glutamine synthetase family. Homooctamer.

The protein localises to the cytoplasm. It carries out the reaction L-glutamate + NH4(+) + ATP = L-glutamine + ADP + phosphate + H(+). In Suillus bovinus (Jersey cow bolete), this protein is Glutamine synthetase (GLNA).